The primary structure comprises 460 residues: ATP synthase subunit beta (460 aa).

150-157 (GGAGVGKT) provides a ligand contact to ATP.

This sequence belongs to the ATPase alpha/beta chains family. As to quaternary structure, F-type ATPases have 2 components, CF(1) - the catalytic core - and CF(0) - the membrane proton channel. CF(1) has five subunits: alpha(3), beta(3), gamma(1), delta(1), epsilon(1). CF(0) has three main subunits: a(1), b(2) and c(9-12). The alpha and beta chains form an alternating ring which encloses part of the gamma chain. CF(1) is attached to CF(0) by a central stalk formed by the gamma and epsilon chains, while a peripheral stalk is formed by the delta and b chains.

The protein localises to the cell inner membrane. The catalysed reaction is ATP + H2O + 4 H(+)(in) = ADP + phosphate + 5 H(+)(out). Produces ATP from ADP in the presence of a proton gradient across the membrane. The catalytic sites are hosted primarily by the beta subunits. This chain is ATP synthase subunit beta, found in Serratia proteamaculans (strain 568).